The primary structure comprises 358 residues: Serine/threonine-protein phosphatase 2A activator 2 (358 aa).

As to quaternary structure, interacts with the phosphatase PP2A catalytic subunits PPH21 and PPH22. Forms a ternary complex with PPH21-TAP42.

Its subcellular location is the cytoplasm. The catalysed reaction is [protein]-peptidylproline (omega=180) = [protein]-peptidylproline (omega=0). PPIases accelerate the folding of proteins. It catalyzes the cis-trans isomerization of proline imidic peptide bonds in oligopeptides. Acts as a regulatory subunit for TAP42-associated PP2A-like phosphatases modulating their activity or substrate specificity, probably by inducing a conformational change in the catalytic subunit, a direct target of the PPIase. Can reactivate inactive phosphatase PP2A-phosphatase methylesterase complexes (PP2Ai) in presence of ATP and Mg(2+) by dissociating the inactive form from the complex. Acts also inhibitory at high concentrations. Involved in the regulation of cell cycle progression, mitotic spindle formation and bud morphogenesis. This Saccharomyces cerevisiae (strain ATCC 204508 / S288c) (Baker's yeast) protein is Serine/threonine-protein phosphatase 2A activator 2 (RRD2).